A 411-amino-acid polypeptide reads, in one-letter code: 2,3-bisphosphoglycerate-independent phosphoglycerate mutase (411 aa).

Belongs to the BPG-independent phosphoglycerate mutase family. A-PGAM subfamily.

It carries out the reaction (2R)-2-phosphoglycerate = (2R)-3-phosphoglycerate. Its pathway is carbohydrate degradation; glycolysis; pyruvate from D-glyceraldehyde 3-phosphate: step 3/5. Its function is as follows. Catalyzes the interconversion of 2-phosphoglycerate and 3-phosphoglycerate. The sequence is that of 2,3-bisphosphoglycerate-independent phosphoglycerate mutase from Pyrobaculum arsenaticum (strain DSM 13514 / JCM 11321 / PZ6).